The following is a 310-amino-acid chain: Ribosomal protein uL3 glutamine methyltransferase (310 aa).

It belongs to the protein N5-glutamine methyltransferase family. PrmB subfamily.

The enzyme catalyses L-glutaminyl-[ribosomal protein uL3] + S-adenosyl-L-methionine = N(5)-methyl-L-glutaminyl-[ribosomal protein uL3] + S-adenosyl-L-homocysteine + H(+). Functionally, methylates large ribosomal subunit protein uL3 on a specific glutamine residue. The chain is Ribosomal protein uL3 glutamine methyltransferase from Vibrio anguillarum (strain ATCC 68554 / 775) (Listonella anguillarum).